A 185-amino-acid polypeptide reads, in one-letter code: Elongation factor P (185 aa).

This sequence belongs to the elongation factor P family.

Its subcellular location is the cytoplasm. Its pathway is protein biosynthesis; polypeptide chain elongation. In terms of biological role, involved in peptide bond synthesis. Stimulates efficient translation and peptide-bond synthesis on native or reconstituted 70S ribosomes in vitro. Probably functions indirectly by altering the affinity of the ribosome for aminoacyl-tRNA, thus increasing their reactivity as acceptors for peptidyl transferase. The sequence is that of Elongation factor P from Halalkalibacterium halodurans (strain ATCC BAA-125 / DSM 18197 / FERM 7344 / JCM 9153 / C-125) (Bacillus halodurans).